Here is an 85-residue protein sequence, read N- to C-terminus: Large ribosomal subunit protein bL27 (85 aa).

The segment covering 1–13 has biased composition (polar residues); that stretch reads MAKTKSGGSTSNG. The interval 1–26 is disordered; it reads MAKTKSGGSTSNGRDSKGRRLGQKLG.

This sequence belongs to the bacterial ribosomal protein bL27 family.

The polypeptide is Large ribosomal subunit protein bL27 (Mycoplasma mobile (strain ATCC 43663 / 163K / NCTC 11711) (Mesomycoplasma mobile)).